The primary structure comprises 331 residues: uncharacterized protein (331 aa).

This is an uncharacterized protein from Orgyia pseudotsugata (Douglas-fir tussock moth).